The chain runs to 485 residues: Katanin p60 ATPase-containing subunit A1 (485 aa).

Positions 101-173 (HRSSPCVVRK…KNKAEAVETE (73 aa)) are disordered. A compositionally biased stretch (basic and acidic residues) spans 141 to 173 (NGDKGKPQKSKEKKENPSKPKEDKNKAEAVETE). Position 244–251 (244–251 (GPPGTGKT)) interacts with ATP.

This sequence belongs to the AAA ATPase family. Katanin p60 subunit A1 subfamily. As to quaternary structure, can homooligomerize into hexameric rings, which may be promoted by interaction with microtubules. Interacts with katnb1, which may serve as a targeting subunit.

It is found in the cytoplasm. It localises to the cytoskeleton. The protein localises to the microtubule organizing center. The protein resides in the centrosome. Its subcellular location is the spindle pole. It is found in the spindle. The catalysed reaction is n ATP + n H2O + a microtubule = n ADP + n phosphate + (n+1) alpha/beta tubulin heterodimers.. Its activity is regulated as follows. ATPase activity is stimulated by microtubules, which promote homooligomerization. ATP-dependent microtubule severing is stimulated by interaction with katnb1. In terms of biological role, catalytic subunit of a complex which severs microtubules in an ATP-dependent manner. Microtubule severing may promote rapid reorganization of cellular microtubule arrays and the release of microtubules from the centrosome following nucleation. In Danio rerio (Zebrafish), this protein is Katanin p60 ATPase-containing subunit A1 (katna1).